The sequence spans 842 residues: Pentatricopeptide repeat-containing protein At3g23020 (842 aa).

The tract at residues 40-61 (YVPGTHESDKGPQRSTRNGDRG) is disordered. Over residues 45-59 (HESDKGPQRSTRNGD) the composition is skewed to basic and acidic residues. PPR repeat units follow at residues 186 to 220 (NVIHYNIMLRILGKACKWRYVQSLWDEMIRKGIKP), 221 to 255 (INSTYGTLIDVYSKGGLKVHALCWLGKMSKIGMQP), 256 to 290 (DEVTTGIVLQMYKKAREFQKAEEFFKKWSCDENKA), 297 to 331 (SSYTYNTMIDTYGKSGQIKEASETFKRMLEEGIVP), 332 to 362 (TTVTFNTMIHIYGNNGQLGEVTSLMKTMKLH), 366 to 400 (DTRTYNILISLHTKNNDIERAGAYFKEMKDDGLKP), 401 to 435 (DPVSYRTLLYAFSIRHMVEEAEGLIAEMDDDNVEI), 436 to 470 (DEYTQSALTRMYVEAEMLEKSWSWFKRFHVAGNMS), 474 to 500 (YSANIDAYGERGYLSEAERVFICCQEV), 504 to 538 (TVIEYNVMIKAYGISKSCEKACELFESMMSYGVTP), 539 to 573 (DKCTYNTLVQILASADMPHKGRCYLEKMRETGYVS), 574 to 608 (DCIPYCAVISSFVKLGQLNMAEEVYKEMVEYNIEP), 609 to 643 (DVVVYGVLINAFADTGNVQQAMSYVEAMKEAGIPG), 644 to 674 (NSVIYNSLIKLYTKVGYLDEAEAIYRKLLQS), 682 to 712 (DVYTSNCMINLYSERSMVRKAEAIFDSMKQR), 716 to 750 (NEFTFAMMLCMYKKNGRFEEATQIAKQMREMKILT), 751 to 785 (DPLSYNSVLGLFALDGRFKEAVETFKEMVSSGIQP), and 786 to 820 (DDSTFKSLGTILMKLGMSKKAVRKIEEIRKKEIKR).

It belongs to the PPR family. P subfamily.

In Arabidopsis thaliana (Mouse-ear cress), this protein is Pentatricopeptide repeat-containing protein At3g23020.